The following is a 353-amino-acid chain: 2-Hydroxyacid oxidase 2 (353 aa).

Residues 2-353 form the FMN hydroxy acid dehydrogenase domain; sequence PLVCLTDFRE…NQDLIQFSRL (352 aa). Residues 77-79, Ser-106, and Gln-128 each bind FMN; that span reads PTG. Tyr-130 serves as a coordination point for a 2-oxocarboxylate. Position 156 (Thr-156) interacts with FMN. Residue Arg-165 coordinates a 2-oxocarboxylate. Lys-224 is an FMN binding site. The active-site Proton acceptor is His-248. Residue Arg-251 coordinates a 2-oxocarboxylate. FMN is bound by residues 279 to 283 and 302 to 303; these read DGGIR and GR. Positions 351 to 353 match the Microbody targeting signal motif; that stretch reads SRL.

The protein belongs to the FMN-dependent alpha-hydroxy acid dehydrogenase family. Homotetramer. FMN serves as cofactor.

The protein resides in the peroxisome. It catalyses the reaction a (2S)-2-hydroxycarboxylate + O2 = a 2-oxocarboxylate + H2O2. The enzyme catalyses 2-hydroxyhexadecanoate + O2 = 2-oxohexadecanoate + H2O2. It carries out the reaction 2-hydroxyoctanoate + O2 = 2-oxooctanoate + H2O2. It functions in the pathway lipid metabolism; fatty acid metabolism. Oxidase that catalyzes the oxidation of medium and long chain hydroxyacids such as 2-hydroxyhexadecanoate and 2-hydroxyoctanoate, to the correspondong 2-oxoacids. Its role in the oxidation of 2-hydroxy fatty acids may contribute to the general pathway of fatty acid alpha-oxidation. Active in vitro with the artificial electron acceptor 2,6-dichlorophenolindophenol (DCIP), but O2 is believed to be the physiological electron acceptor, leading to the production of H2O2. This is 2-Hydroxyacid oxidase 2 (HAO2) from Bos taurus (Bovine).